Here is a 34-residue protein sequence, read N- to C-terminus: Small, acid-soluble spore protein M (34 aa).

Over residues 1–10 (MKTRPKKAGQ) the composition is skewed to basic residues. The segment at 1–34 (MKTRPKKAGQQKKTESKAIDSLDKKLGGPNRPST) is disordered. Over residues 12 to 26 (KKTESKAIDSLDKKL) the composition is skewed to basic and acidic residues.

Its subcellular location is the spore core. The chain is Small, acid-soluble spore protein M (sspM) from Bacillus subtilis (strain 168).